The primary structure comprises 1238 residues: MNNNNNNNNNKTTMNSMIVTVRIRPESQSEILNKNCKTIVRVIDDNMLVFDPNDIDIGAFNNNRNNKQSQQPVEQKYIFDRVFDQYATQEEVFENTTKELVSYVISGHNASVFAYGASGAGKTHTMVGGINTGPGIMVLTMKELFSLIEKDRSNQYIVSMSYLEVYNETIRDLLITNTGGGGNSNNKVLELCEDENKQIVIRDLSWEYPTSADQVFKLLKYGNLNRKQSPTQTNQTSSRSHAVLQITVKQQNLQDKSKISFGKLSLIDLAGSERASKTLNTGDRLKEGTSINKSLLALGNCIKALGELCKNQQSQQQSSNPNFIPYRDSKLTRILKDSLTGSCKTIMIANISPNSSSFEETHNTLKYAQRAKSIKTQITKNVFASSTNLITQYNEIIKEQREEIKQLKLKLIQATSNNNNSNNNNNNNNNNYFSNSFGSCGNKNQPIKQPTPPTSLFHQQNQKYYRNDDDDDDDNDQEENNDEVLINEDDEEVDGEDSNNRDNDESMIQQLEEMSLLINSNLQDTLTLKKTQSIQRQRKRELENELKSLEKQQQSILNENNNVDIIKRTNEIGSQILKIKTLESSINEKLEMNNQWRRKLQSELTLKFVNSPKNLKILIQQARAATLELDRFDLTERMIDDRSKLNLKTNECKSLKDSLSWMFGILSDGFKLLTENNLATDDFLKDFLKSGDLINNLDNSFIINENNDSNNNNIIENDDIDLSFNNDINNNNNNNNNNNNNNNNNNNNNNNNNNNNNNNNNNNNNNNNNNNNNNVPLNCNNSNSNINNKNQNIINPSPLKPRRIMSGSNNIIKSTNSNSRMTSTATTTAASTATATTTTIGKEKKGEIRSIVNPINKISSSTSLLPSSSTKISNTTPLYSRTSILRKRTLEIDDSTDSNPRTKKINVSSPVVTKPKQLLPSTTTATTTTLSSPLVNKPKQILPTTSSLQPKPHTKIQPHKNNNNNNNNIAPQMNMNIQIPNPIPIPIPMHVQIPISNPIPMPSPSSMNLKEKLDSLSQLCNNRSAKNENYNHNNSFNSQNPFVHPLQMHPPQLQLPLHPPQTMIMQSNMDLKMKLDSLSFFNNNNNNHQAQNDLSFDYGQNTLSNENLILHNKIASLSSTLINQPHPMRVKKLTPTSTISSSISTRPITTSTTTSTTVPSVVSNRIKSLVHSNSPIKENLYKEKLSSTASATLTPNRNNSQIVQPFKRGVLGNGPTSSSSRLLPSSRTTVNTSRKIIK.

A Kinesin motor domain is found at 16-374 (SMIVTVRIRP…LKYAQRAKSI (359 aa)). 116-123 (GASGAGKT) contacts ATP. A compositionally biased stretch (low complexity) spans 417–436 (NNNNSNNNNNNNNNNYFSNS). Residues 417–503 (NNNNSNNNNN…DGEDSNNRDN (87 aa)) are disordered. The span at 437-464 (FGSCGNKNQPIKQPTPPTSLFHQQNQKY) shows a compositional bias: polar residues. A compositionally biased stretch (acidic residues) spans 468–497 (DDDDDDDNDQEENNDEVLINEDDEEVDGED). Residues 527–602 (TLKKTQSIQR…NNQWRRKLQS (76 aa)) are a coiled coil. Composition is skewed to low complexity over residues 726 to 795 (NDIN…NIIN), 918 to 934 (LLPSTTTATTTTLSSPL), and 961 to 971 (NNNNNNNNIAP). 4 disordered regions span residues 726–802 (NDIN…LKPR), 891–971 (EIDD…NIAP), 1134–1156 (TPTSTISSSISTRPITTSTTTST), and 1191–1238 (ATLT…KIIK). Residues 1191-1203 (ATLTPNRNNSQIV) are compositionally biased toward polar residues. Residues 1215–1228 (PTSSSSRLLPSSRT) show a composition bias toward low complexity. Residues 1229–1238 (TVNTSRKIIK) show a composition bias toward polar residues.

It belongs to the TRAFAC class myosin-kinesin ATPase superfamily. Kinesin family.

It is found in the cytoplasm. The protein resides in the cytoskeleton. Microtubule-associated force-producing protein that plays a role in organelle transport. Its motor activity is directed toward the microtubule's plus end. Cooperates with kif8 and dynein to organize interphase microtubules. The chain is Kinesin-related protein 10 (kif10) from Dictyostelium discoideum (Social amoeba).